The sequence spans 155 residues: MRCPYCQNADTRVVDSRLIGEGEQVRRRRQCPSCGERFTTHEAPELVYPRVVKSDGRREAFDEDKLRLGFRRALEKRPVATEAVEAAVRRVCKRVSGAGEREVAANVIGEYVMEELRELDVVAYVRFASVYRRFEDVGAFREVIEGLEQHRRDDD.

A zinc finger spans residues 3–34 (CPYCQNADTRVVDSRLIGEGEQVRRRRQCPSC). One can recognise an ATP-cone domain in the interval 49-139 (PRVVKSDGRR…VYRRFEDVGA (91 aa)).

The protein belongs to the NrdR family. Zn(2+) is required as a cofactor.

Functionally, negatively regulates transcription of bacterial ribonucleotide reductase nrd genes and operons by binding to NrdR-boxes. This chain is Transcriptional repressor NrdR, found in Halorhodospira halophila (strain DSM 244 / SL1) (Ectothiorhodospira halophila (strain DSM 244 / SL1)).